An 89-amino-acid polypeptide reads, in one-letter code: Small ribosomal subunit protein uS15 (89 aa).

Residues 1 to 10 show a composition bias toward basic and acidic residues; sequence MSLDTTEKQE. Residues 1-23 are disordered; it reads MSLDTTEKQELINAHQTHATDTG. Residues 14–23 are compositionally biased toward polar residues; the sequence is AHQTHATDTG.

This sequence belongs to the universal ribosomal protein uS15 family. Part of the 30S ribosomal subunit. Forms a bridge to the 50S subunit in the 70S ribosome, contacting the 23S rRNA.

Functionally, one of the primary rRNA binding proteins, it binds directly to 16S rRNA where it helps nucleate assembly of the platform of the 30S subunit by binding and bridging several RNA helices of the 16S rRNA. In terms of biological role, forms an intersubunit bridge (bridge B4) with the 23S rRNA of the 50S subunit in the ribosome. In Synechococcus sp. (strain WH7803), this protein is Small ribosomal subunit protein uS15.